The sequence spans 393 residues: Triacylglycerol lipase 1 (393 aa).

The N-terminal stretch at 1-20 (MKWLLVAVLTSLTIFSALTQ) is a signal peptide. An N-linked (GlcNAc...) asparagine glycan is attached at Asn-41. The Nucleophile role is filled by Ser-166. N-linked (GlcNAc...) asparagine glycosylation is present at Asn-261. Active-site charge relay system residues include Asp-334 and His-363.

It belongs to the AB hydrolase superfamily. Lipase family. Expressed in seedlings, roots, leaves, flowers and siliques. Specifically expressed in the epidermis.

It is found in the secreted. It carries out the reaction a triacylglycerol + H2O = a diacylglycerol + a fatty acid + H(+). It catalyses the reaction 1,2,3-tributanoylglycerol + H2O = dibutanoylglycerol + butanoate + H(+). The catalysed reaction is 1,2,3-trioctanoylglycerol + H2O = dioctanoylglycerol + octanoate + H(+). It participates in lipid metabolism; glycerolipid metabolism. Triacylglycerol (TAG) lipase active on triolein, trioctanoin, tributyrin and 1,3-Diolein, but not on phospho- and galactolipids. Involved but dispensable for TAG storage breakdown during seed germination. In Arabidopsis thaliana (Mouse-ear cress), this protein is Triacylglycerol lipase 1.